A 274-amino-acid chain; its full sequence is Thiamine kinase (274 aa).

This sequence belongs to the thiamine kinase family.

The enzyme catalyses thiamine + ATP = thiamine phosphate + ADP + H(+). It functions in the pathway cofactor biosynthesis; thiamine diphosphate biosynthesis; thiamine phosphate from thiamine: step 1/1. Functionally, catalyzes the ATP-dependent phosphorylation of thiamine to thiamine phosphate. Is involved in thiamine salvage. This chain is Thiamine kinase, found in Salmonella heidelberg (strain SL476).